The sequence spans 425 residues: MDHATRAHFTMTVGEVDPLLADALASERGRQQNQIELIASENIVSRAVLDALGHEITNKTLEGYPGNRFHGGGQFVDIAEQAAIDRAKQLFNCGYANVQPHSGTQANLAVFFLLLKPGEKVLSLDLAAGGHLSHGMKANLSGRWFDATNYNVNPQNEVIDLDEMERLAEEIRPKLLITGGSAYPRELDFERMSRIAKKVGAYFLVDMAHIAGLVAGGVHPSPFPHADIVTCTTTKTLRGPRGGLILTNNEEWYKKLQAAVFPGVQGSLHSNVLAAKAICLGEAMLDDFKVYARQVVANAKVLANTLAERGVRIVSGGTDTHIVLLDLASKGLLGKQAETLLAKANITSNKNPIPGDSPRPPEWVGMRLGSSAATTRGLKEAEFRVLGTVIADLIDAEVAGKADDVVEGAKAKIAELTNTFPVYGQ.

Residues leucine 126 and 130–132 (GHL) each bind (6S)-5,6,7,8-tetrahydrofolate. An N6-(pyridoxal phosphate)lysine modification is found at lysine 235. Glutamate 251 contributes to the (6S)-5,6,7,8-tetrahydrofolate binding site.

The protein belongs to the SHMT family. Homodimer. Requires pyridoxal 5'-phosphate as cofactor.

Its subcellular location is the cytoplasm. The enzyme catalyses (6R)-5,10-methylene-5,6,7,8-tetrahydrofolate + D-alanine + H2O = 2-methylserine + (6S)-5,6,7,8-tetrahydrofolate. Its pathway is one-carbon metabolism; tetrahydrofolate interconversion. In terms of biological role, catalyzes the reversible interconversion of alpha-methyl-L-serine to D-alanine with tetrahydrofolate (THF) serving as the one-carbon carrier. Cannot use alpha-methyl-D-serine, L-serine, D-serine or L-alanine. The chain is 2-methylserine hydroxymethyltransferase from Ensifer sp.